Consider the following 254-residue polypeptide: NAD-dependent glycerol dehydrogenase (254 aa).

An NAD(+)-binding site is contributed by 18 to 47; sequence VVTGAASGIGKAMAELFSEKGAYVVLLDIK. Catalysis depends on Y160, which acts as the Proton acceptor. K164 contributes to the NAD(+) binding site.

The protein belongs to the short-chain dehydrogenases/reductases (SDR) family. Requires Mg(2+) as cofactor. It depends on Mn(2+) as a cofactor.

The protein resides in the cytoplasm. It catalyses the reaction glycerol + NAD(+) = dihydroxyacetone + NADH + H(+). With respect to regulation, inhibited by Zn(2+). Functionally, involved in the glycerol metabolism. Catalyzes the NAD-dependent oxidation of glycerol to dihydroxyacetone (glycerone). GolD specifically uses NAD. In Listeria innocua serovar 6a (strain ATCC BAA-680 / CLIP 11262), this protein is NAD-dependent glycerol dehydrogenase.